Reading from the N-terminus, the 141-residue chain is Large ribosomal subunit protein uL16 (141 aa).

Over residues 1 to 17 the composition is skewed to basic residues; the sequence is MLQPKRTKYRKVQKGKM. Residues 1-29 form a disordered region; the sequence is MLQPKRTKYRKVQKGKMKGNSQRGHELSN.

Belongs to the universal ribosomal protein uL16 family. In terms of assembly, part of the 50S ribosomal subunit.

Functionally, binds 23S rRNA and is also seen to make contacts with the A and possibly P site tRNAs. This is Large ribosomal subunit protein uL16 from Flavobacterium psychrophilum (strain ATCC 49511 / DSM 21280 / CIP 103535 / JIP02/86).